A 394-amino-acid polypeptide reads, in one-letter code: 1-deoxy-D-xylulose 5-phosphate reductoisomerase (394 aa).

Positions 14, 15, 16, 17, 40, 43, and 130 each coordinate NADPH. Residue K131 coordinates 1-deoxy-D-xylulose 5-phosphate. Residue E132 coordinates NADPH. D154 contacts Mn(2+). 1-deoxy-D-xylulose 5-phosphate-binding residues include S155, E156, S180, and H203. E156 contacts Mn(2+). An NADPH-binding site is contributed by G209. Residues S216, N221, K222, and E225 each coordinate 1-deoxy-D-xylulose 5-phosphate. Mn(2+) is bound at residue E225.

This sequence belongs to the DXR family. Mg(2+) serves as cofactor. It depends on Mn(2+) as a cofactor.

The catalysed reaction is 2-C-methyl-D-erythritol 4-phosphate + NADP(+) = 1-deoxy-D-xylulose 5-phosphate + NADPH + H(+). It participates in isoprenoid biosynthesis; isopentenyl diphosphate biosynthesis via DXP pathway; isopentenyl diphosphate from 1-deoxy-D-xylulose 5-phosphate: step 1/6. Functionally, catalyzes the NADPH-dependent rearrangement and reduction of 1-deoxy-D-xylulose-5-phosphate (DXP) to 2-C-methyl-D-erythritol 4-phosphate (MEP). This chain is 1-deoxy-D-xylulose 5-phosphate reductoisomerase, found in Corynebacterium efficiens (strain DSM 44549 / YS-314 / AJ 12310 / JCM 11189 / NBRC 100395).